The primary structure comprises 340 residues: Alcohol dehydrogenase (340 aa).

Zn(2+) contacts are provided by cysteine 40 and histidine 63.

The protein belongs to the zinc-containing alcohol dehydrogenase family. Zn(2+) is required as a cofactor.

The catalysed reaction is a primary alcohol + NAD(+) = an aldehyde + NADH + H(+). It carries out the reaction a secondary alcohol + NAD(+) = a ketone + NADH + H(+). In Rhizobium meliloti (strain 1021) (Ensifer meliloti), this protein is Alcohol dehydrogenase (adhA).